Consider the following 92-residue polypeptide: LYR motif-containing protein 4 homolog (92 aa).

Residues 48–68 (AEIDRQMAEGQQNLELIRRQV) adopt a coiled-coil conformation.

This sequence belongs to the complex I LYR family. Component of the mitochondrial core iron-sulfur cluster (ISC) assembly complex at least composed of the cysteine desulfurase Nfs1, the scaffold protein IscU, the accessory protein bcn92/Isd11/Lyrm4, and probably fh/frataxin. Interacts with Nfs1.

It is found in the mitochondrion. Stabilizing factor of the core iron-sulfur cluster (ISC) assembly complex that regulates the stability and cysteine desulfurase activity of Nfs1 and participates in the [2Fe-2S] clusters assembly on the scaffolding protein IscU. This is LYR motif-containing protein 4 homolog from Drosophila melanogaster (Fruit fly).